A 308-amino-acid chain; its full sequence is Polyketide transferase claH (308 aa).

The interval 50–280 (SDIAVYFSQQ…RVEVAAGKSH (231 aa)) is abhydrolase domain.

It belongs to the polyketide transferase af380 family.

Its pathway is secondary metabolite biosynthesis. Its function is as follows. Polyketide transferase; part of the cla gene cluster that produces clavatol and ortho-quinone methide. The clavatol biosynthesis cluster cla and the terrestric acid cluster tra are both involved in the production of peniphenones and penilactones. The non-reducing PKS claF is responsible for the formation of clavatol from successive condensations of 3 malonyl-CoA units, presumably with a simple acetyl-CoA starter unit, and 2 methylation steps. The esterase claE probably collaborates with claF by catalyzing the hydrolysis of ACP-bound acyl intermediates to free the ACP from stalled intermediates. The clavatol oxidase claD then converts clavatol to hydroxyclavatol. Spontaneous dehydration of hydroxyclavatol leads to the accumulation of the highly active ortho-quinone methide. On the other hand, the PKS-NRPS hybrid traA is involved in the formation of crustosic acid, with the help of traB and traD. The polyketide synthase module (PKS) of traA is responsible for the synthesis of the polyketide backbone via the condensation of an acetyl-CoA starter unit with 3 malonyl-CoA units. The downstream nonribosomal peptide synthetase (NRPS) module then amidates the carboxyl end of the polyketide with L-malic acid. Because traA lacks a designated enoylreductase (ER) domain, the required activity is provided the enoyl reductase traG. Crustosic acid undergoes decarboxylation and isomerization to the terrestric acid, catalyzed by the 2-oxoglutarate-dependent dioxygenase traH. Both acids are further converted to the 2 gamma-butyrolactones (R)-5-methyltetronic acid and (S)-5-carboxylmethyltetronic acid, with involvement of the cytochrome P450 monooxygenase claJ. Spontaneous addition of the methide to these gamma-butyrolactones leads to peniphenone D and penilactone D, which undergo again stereospecific attacking by methide to give penilactones A and B. The function of the polyketide transferase claH has not been investigated yet. This chain is Polyketide transferase claH, found in Penicillium crustosum (Blue mold fungus).